A 275-amino-acid chain; its full sequence is tRNA pseudouridine synthase A (275 aa).

The active-site Nucleophile is the aspartate 55. Residue tyrosine 111 participates in substrate binding.

The protein belongs to the tRNA pseudouridine synthase TruA family.

It catalyses the reaction uridine(38/39/40) in tRNA = pseudouridine(38/39/40) in tRNA. Its function is as follows. Formation of pseudouridine at positions 38, 39 and 40 in the anticodon stem and loop of transfer RNAs. In Methanococcoides burtonii (strain DSM 6242 / NBRC 107633 / OCM 468 / ACE-M), this protein is tRNA pseudouridine synthase A.